A 381-amino-acid chain; its full sequence is MVQILHISDTHLGKRQYSLVEREKDIYDIFSQLVDIAIKEHVDVIIHSGDLFDVSSPTTNALVMAIKILKRLKDVNIPFLSIPGDHDTPKRKGYLIPHNILSELDLIKILNYEKPYIIKGIEVYGIPHIPTVSKSILVSALSALRPKSSRSILLLHQGVKQILPYDGSWQMELGSLPKGFGYYALGHIHTRWRLTQDDGSVIAIAGSPDIMREEEIEGYEKFGKGAYLIDFSKDLPILSTINITVRPQKVVTINTKNIKKDILTIRDDLIEHNKSENNKPILHIIVEGERMRKDLLYKELLPLNDVALYYRIYKDETTQTVDNLSYTLPRDKGLDKIIIEYLTKYEKFSEDEANLILQMIKNVESDEIVNEILKKLTGVNL.

4 residues coordinate Mn(2+): Asp-9, His-11, Asp-50, and Asp-85. Residue His-86 is the Proton donor of the active site. Positions 156, 187, and 189 each coordinate Mn(2+).

Belongs to the MRE11/RAD32 family. Homodimer. Forms a heterotetramer composed of two Mre11 subunits and two Rad50 subunits. The cofactor is Mn(2+).

Nuclease activity is regulated by Rad50. In terms of biological role, part of the Rad50/Mre11 complex, which is involved in the early steps of DNA double-strand break (DSB) repair. The complex may facilitate opening of the processed DNA ends to aid in the recruitment of HerA and NurA. Mre11 binds to DSB ends and has both double-stranded 3'-5' exonuclease activity and single-stranded endonuclease activity. The chain is DNA double-strand break repair protein Mre11 from Saccharolobus solfataricus (strain ATCC 35092 / DSM 1617 / JCM 11322 / P2) (Sulfolobus solfataricus).